A 145-amino-acid polypeptide reads, in one-letter code: Phospholipase A2, membrane associated (145 aa).

The first 20 residues, 1–20, serve as a signal peptide directing secretion; that stretch reads MKLLLLLLVVMASDLPQAHG. Intrachain disulfides connect cysteine 46–cysteine 138, cysteine 48–cysteine 64, cysteine 63–cysteine 118, cysteine 69–cysteine 145, cysteine 70–cysteine 111, cysteine 79–cysteine 104, and cysteine 97–cysteine 109. Positions 47, 49, and 51 each coordinate Ca(2+). Residue histidine 67 is part of the active site. Aspartate 68 provides a ligand contact to Ca(2+). The active site involves aspartate 112.

It belongs to the phospholipase A2 family. It depends on Ca(2+) as a cofactor. Alveolar macrophages, and at much lower levels in peripheral blood monocytes and peritoneal macrophages.

It is found in the secreted. It localises to the cell membrane. The protein resides in the mitochondrion outer membrane. It carries out the reaction a 1,2-diacyl-sn-glycero-3-phosphoethanolamine + H2O = a 1-acyl-sn-glycero-3-phosphoethanolamine + a fatty acid + H(+). The enzyme catalyses 1-hexadecanoyl-2-(9Z-octadecenoyl)-sn-glycero-3-phosphoethanolamine + H2O = 1-hexadecanoyl-sn-glycero-3-phosphoethanolamine + (9Z)-octadecenoate + H(+). It catalyses the reaction 1-hexadecanoyl-2-(9Z,12Z-octadecadienoyl)-sn-glycero-3-phosphoethanolamine + H2O = 1-hexadecanoyl-sn-glycero-3-phosphoethanolamine + (9Z,12Z)-octadecadienoate + H(+). The catalysed reaction is 1-hexadecanoyl-2-(5Z,8Z,11Z,14Z-eicosatetraenoyl)-sn-glycero-3-phosphoethanolamine + H2O = 1-hexadecanoyl-sn-glycero-3-phosphoethanolamine + (5Z,8Z,11Z,14Z)-eicosatetraenoate + H(+). It carries out the reaction N-hexadecanoyl-1,2-di-(9Z-octadecenoyl)-sn-glycero-3-phosphoethanolamine + H2O = N-hexadecanoyl-1-(9Z-octadecenoyl)-sn-glycero-3-phosphoethanolamine + (9Z)-octadecenoate + H(+). The enzyme catalyses 1,2-dihexadecanoyl-sn-glycero-3-phospho-(1'-sn-glycerol) + H2O = 1-hexadecanoyl-sn-glycero-3-phospho-(1'-sn-glycerol) + hexadecanoate + H(+). It catalyses the reaction 1-hexadecanoyl-2-(9Z-octadecenoyl)-sn-glycero-3-phosphoglycerol + H2O = 1-hexadecanoyl-sn-glycero-3-phosphoglycerol + (9Z)-octadecenoate + H(+). The catalysed reaction is 1-hexadecanoyl-2-(9Z-octadecenoyl)-sn-glycero-3-phospho-(1'-sn-glycerol) + H2O = 1-hexadecanoyl-sn-glycero-3-phospho-(1'-sn-glycerol) + (9Z)-octadecenoate + H(+). It carries out the reaction a 1,2-diacyl-sn-glycero-3-phosphocholine + H2O = a 1-acyl-sn-glycero-3-phosphocholine + a fatty acid + H(+). The enzyme catalyses 1,2-dihexadecanoyl-sn-glycero-3-phosphocholine + H2O = 1-hexadecanoyl-sn-glycero-3-phosphocholine + hexadecanoate + H(+). It catalyses the reaction 1-hexadecanoyl-2-(9Z-octadecenoyl)-sn-glycero-3-phosphocholine + H2O = 1-hexadecanoyl-sn-glycero-3-phosphocholine + (9Z)-octadecenoate + H(+). The catalysed reaction is 1-hexadecanoyl-2-(9Z,12Z-octadecadienoyl)-sn-glycero-3-phosphocholine + H2O = (9Z,12Z)-octadecadienoate + 1-hexadecanoyl-sn-glycero-3-phosphocholine + H(+). It carries out the reaction 1-hexadecanoyl-2-(4Z,7Z,10Z,13Z,16Z,19Z-docosahexaenoyl)-sn-glycero-3-phosphocholine + H2O = (4Z,7Z,10Z,13Z,16Z,19Z)-docosahexaenoate + 1-hexadecanoyl-sn-glycero-3-phosphocholine + H(+). Secretory calcium-dependent phospholipase A2 that primarily targets extracellular phospholipids with implications in host antimicrobial defense, inflammatory response and tissue regeneration. Hydrolyzes the ester bond of the fatty acyl group attached at sn-2 position of phospholipids (phospholipase A2 activity) with preference for phosphatidylethanolamines and phosphatidylglycerols over phosphatidylcholines. Contributes to lipid remodeling of cellular membranes and generation of lipid mediators involved in pathogen clearance. Displays bactericidal activity against Gram-positive bacteria by directly hydrolyzing phospholipids of the bacterial membrane. Upon sterile inflammation, targets membrane phospholipids of extracellular mitochondria released from activated platelets, generating free unsaturated fatty acids such as arachidonate that is used by neighboring leukocytes to synthesize inflammatory eicosanoids such as leukotrienes. Simultaneously, by compromising mitochondrial membrane integrity, promotes the release in circulation of potent damage-associated molecular pattern molecules that activate the innate immune response. Plays a stem cell regulator role in the intestinal crypt. Within intracellular compartment mediates Paneth cell differentiation and its stem cell supporting functions by inhibiting Wnt signaling pathway in intestinal stem cell (ICS). Secreted in the intestinal lumen upon inflammation, acts in an autocrine way and promotes prostaglandin E2 synthesis that stimulates Wnt signaling pathway in ICS cells and tissue regeneration. May play a role in the biosynthesis of N-acyl ethanolamines that regulate energy metabolism and inflammation. Hydrolyzes N-acyl phosphatidylethanolamines to N-acyl lysophosphatidylethanolamines, which are further cleaved by a lysophospholipase D to release N-acyl ethanolamines. Independent of its catalytic activity, acts as a ligand for integrins. Binds to and activates integrins ITGAV:ITGB3, ITGA4:ITGB1 and ITGA5:ITGB1. Binds to a site (site 2) which is distinct from the classical ligand-binding site (site 1) and induces integrin conformational changes and enhanced ligand binding to site 1. Induces cell proliferation in an integrin-dependent manner. The protein is Phospholipase A2, membrane associated (PLA2G2A) of Cavia porcellus (Guinea pig).